The sequence spans 453 residues: uncharacterized protein (453 aa).

This sequence to yeast RIT1.

This is an uncharacterized protein from Schizosaccharomyces pombe (strain 972 / ATCC 24843) (Fission yeast).